The following is a 244-amino-acid chain: MDPGAALQRRAGGGGGLGAGSPALSGGQGRRRKQPPRPADFKLQVIIIGSRGVGKTSLMERFTDDTFCEACKSTVGVDFKIKTVELRGKKIRLQIWDTAGQERFNSITSAYYRSAKGIILVYDITKKETFDDLPKWMKMIDKYASEDAELLLVGNKLDCETDREITRQQGEKFAQQITGMRFCEASAKDNFNVDEIFLKLVDDILKKMPLDILRNELSNSILSLQPEPEIPPELPPPRPHVRCC.

An N-acetylmethionine modification is found at M1. The segment covering 1–10 (MDPGAALQRR) has biased composition (low complexity). The disordered stretch occupies residues 1 to 37 (MDPGAALQRRAGGGGGLGAGSPALSGGQGRRRKQPPR). Phosphoserine occurs at positions 21 and 25. G52 provides a ligand contact to GDP. The GTP site is built by G52, V53, G54, K55, and T56. Residues G54, K55, T56, and S57 each coordinate GDP. Mg(2+) is bound at residue T56. 2 short sequence motifs (switch) span residues 65 to 79 (DTFCEACKSTVGVDF) and 97 to 114 (DTAGQERFNSITSAYYRS). GTP is bound by residues S73 and T74. Mg(2+) is bound by residues T74 and D97. G100 contributes to the GTP binding site. Phosphoserine; by LRRK2 is present on S106. Residues N155, K156, D158, and C159 each coordinate GDP. N155, K156, and D158 together coordinate GTP. Residues S186, A187, and K188 each contribute to the GTP site. 2 residues coordinate GDP: A187 and K188. The interval 225 to 244 (QPEPEIPPELPPPRPHVRCC) is disordered. The segment covering 228–238 (PEIPPELPPPR) has biased composition (pro residues). S-geranylgeranyl cysteine attachment occurs at residues C243 and C244.

This sequence belongs to the small GTPase superfamily. Rab family. In terms of assembly, interacts with RABIF. Interacts with OPTN. Interacts with LRRK2; interaction facilitates phosphorylation of Ser-106. Interacts with GDI1, GDI2, CHM and CHML; these interactions are disrupted by phosphorylation on Ser-106. Interacts with RILPL1 and RILPL2; these interactions are dependent on phosphorylation of Ser-106. The cofactor is Mg(2+). Phosphorylation of Ser-106 in the switch II region by LRRK2 prevents the association of RAB regulatory proteins, including CHM, CHML and RAB GDP dissociation inhibitors GDI1 and GDI2.

It localises to the recycling endosome membrane. The protein resides in the lysosome membrane. Its subcellular location is the golgi apparatus membrane. It is found in the cytoplasmic vesicle. The protein localises to the autophagosome. The enzyme catalyses GTP + H2O = GDP + phosphate + H(+). Regulated by guanine nucleotide exchange factors (GEFs) including DENND3 which promote the exchange of bound GDP for free GTP. Regulated by GTPase activating proteins (GAPs) which increase the GTP hydrolysis activity. Inhibited by GDP dissociation inhibitors (GDIs). The small GTPases Rab are key regulators of intracellular membrane trafficking, from the formation of transport vesicles to their fusion with membranes. Rabs cycle between an inactive GDP-bound form and an active GTP-bound form that is able to recruit to membranes different sets of downstream effectors directly responsible for vesicle formation, movement, tethering and fusion. RAB12 may play a role in protein transport from recycling endosomes to lysosomes regulating, for instance, the degradation of the transferrin receptor. Involved in autophagy. This Homo sapiens (Human) protein is Ras-related protein Rab-12.